The primary structure comprises 119 residues: NADH-quinone oxidoreductase subunit A (119 aa).

3 helical membrane passes run 7–27 (FPVLIFIIFGVVLGIALMSIG), 63–83 (LIAILFILFDLETAFLFPWGV), and 88–108 (IGWPGFIAMGVFLLEFIVGFV).

This sequence belongs to the complex I subunit 3 family. As to quaternary structure, NDH-1 is composed of 14 different subunits. Subunits NuoA, H, J, K, L, M, N constitute the membrane sector of the complex.

The protein resides in the cell inner membrane. The enzyme catalyses a quinone + NADH + 5 H(+)(in) = a quinol + NAD(+) + 4 H(+)(out). Its function is as follows. NDH-1 shuttles electrons from NADH, via FMN and iron-sulfur (Fe-S) centers, to quinones in the respiratory chain. The immediate electron acceptor for the enzyme in this species is believed to be ubiquinone. Couples the redox reaction to proton translocation (for every two electrons transferred, four hydrogen ions are translocated across the cytoplasmic membrane), and thus conserves the redox energy in a proton gradient. The protein is NADH-quinone oxidoreductase subunit A of Cupriavidus pinatubonensis (strain JMP 134 / LMG 1197) (Cupriavidus necator (strain JMP 134)).